Reading from the N-terminus, the 140-residue chain is Putative septation protein SpoVG (140 aa).

The interval 88–127 (VAPQAGGLQGAEEPTAVEPAPQLQDESELPWEPGDDGEGA) is disordered. Residues 112 to 124 (DESELPWEPGDDG) show a composition bias toward acidic residues.

This sequence belongs to the SpoVG family.

Its function is as follows. Could be involved in septation. The protein is Putative septation protein SpoVG of Symbiobacterium thermophilum (strain DSM 24528 / JCM 14929 / IAM 14863 / T).